The sequence spans 273 residues: Large ribosomal subunit protein uL2 (273 aa).

The interval Gly196–Lys273 is disordered. 2 stretches are compositionally biased toward basic residues: residues Gly209 to Asn220 and Leu255 to Ser264.

The protein belongs to the universal ribosomal protein uL2 family. In terms of assembly, part of the 50S ribosomal subunit. Forms a bridge to the 30S subunit in the 70S ribosome.

Functionally, one of the primary rRNA binding proteins. Required for association of the 30S and 50S subunits to form the 70S ribosome, for tRNA binding and peptide bond formation. It has been suggested to have peptidyltransferase activity; this is somewhat controversial. Makes several contacts with the 16S rRNA in the 70S ribosome. The protein is Large ribosomal subunit protein uL2 of Phocaeicola vulgatus (strain ATCC 8482 / DSM 1447 / JCM 5826 / CCUG 4940 / NBRC 14291 / NCTC 11154) (Bacteroides vulgatus).